Here is a 319-residue protein sequence, read N- to C-terminus: HTH-type transcriptional regulator YidZ (319 aa).

The 58-residue stretch at 8-65 (LDLNLLLCLQLLMQERSVTKAAKRMNVTPSAVSKSLSKLRTWFDDPLFVNTPLGLTPT) folds into the HTH lysR-type domain. Residues 25-44 (VTKAAKRMNVTPSAVSKSLS) constitute a DNA-binding region (H-T-H motif).

Belongs to the LysR transcriptional regulatory family.

In terms of biological role, involved in anaerobic NO protection. The chain is HTH-type transcriptional regulator YidZ from Citrobacter koseri (strain ATCC BAA-895 / CDC 4225-83 / SGSC4696).